The following is a 389-amino-acid chain: Phosphopentomutase (389 aa).

Mn(2+) is bound by residues D10, D282, H287, D323, H324, and H335.

It belongs to the phosphopentomutase family. It depends on Mn(2+) as a cofactor.

The protein localises to the cytoplasm. The catalysed reaction is 2-deoxy-alpha-D-ribose 1-phosphate = 2-deoxy-D-ribose 5-phosphate. It carries out the reaction alpha-D-ribose 1-phosphate = D-ribose 5-phosphate. The protein operates within carbohydrate degradation; 2-deoxy-D-ribose 1-phosphate degradation; D-glyceraldehyde 3-phosphate and acetaldehyde from 2-deoxy-alpha-D-ribose 1-phosphate: step 1/2. Isomerase that catalyzes the conversion of deoxy-ribose 1-phosphate (dRib-1-P) and ribose 1-phosphate (Rib-1-P) to deoxy-ribose 5-phosphate (dRib-5-P) and ribose 5-phosphate (Rib-5-P), respectively. The sequence is that of Phosphopentomutase from Clostridium kluyveri (strain NBRC 12016).